The following is a 741-amino-acid chain: HSP-interacting protein (741 aa).

TPR repeat units follow at residues 26-59, 65-100, and 102-134; these read SREL…LPAG, AHLR…VPRY, and RALL…EPGN. Residues 168–270 are disordered; sequence ASAKGEERKK…GESKQQKHSA (103 aa). Residues 171–184 show a composition bias toward basic and acidic residues; it reads KGEERKKSRNKRFD. The span at 201–218 shows a compositional bias: polar residues; sequence SASTEKQAGPRQTNGTGN. Positions 219-247 are enriched in basic and acidic residues; that stretch reads HQDHTEDSESNGLEKLEQSTETGEKDMGK. Residues 248–258 show a composition bias toward basic residues; the sequence is KRGAHAAGKKP. A PB1 domain is found at 285-364; sequence MKDVKLVFGE…VPIRFYVVEV (80 aa). 4 TPR repeats span residues 496–530, 532–557, 558–591, and 628–663; these read EFIL…KSDF, EGLI…ACKI, NMET…RLKG, and SHIN…AMEK.

Interacts (via C-terminus) with O1. Interacts (via C-terminus) with OP10 (via N-terminus).

Its function is as follows. Acts as a co-chaperone for HSP90 and is required for proper folding of the myosin motor domain. This Zea mays (Maize) protein is HSP-interacting protein.